Reading from the N-terminus, the 467-residue chain is 2-succinylbenzoate--CoA ligase (467 aa).

It belongs to the ATP-dependent AMP-binding enzyme family. MenE subfamily.

It carries out the reaction 2-succinylbenzoate + ATP + CoA = 2-succinylbenzoyl-CoA + AMP + diphosphate. Its pathway is quinol/quinone metabolism; 1,4-dihydroxy-2-naphthoate biosynthesis; 1,4-dihydroxy-2-naphthoate from chorismate: step 5/7. It functions in the pathway quinol/quinone metabolism; menaquinone biosynthesis. Functionally, converts 2-succinylbenzoate (OSB) to 2-succinylbenzoyl-CoA (OSB-CoA). The protein is 2-succinylbenzoate--CoA ligase of Listeria monocytogenes serotype 4b (strain F2365).